We begin with the raw amino-acid sequence, 298 residues long: UDP-N-acetylenolpyruvoylglucosamine reductase (298 aa).

One can recognise an FAD-binding PCMH-type domain in the interval 26 to 190; it reads RAGGPAERLY…VAAVLDLEPG (165 aa). R170 is a catalytic residue. S219 serves as the catalytic Proton donor. E289 is an active-site residue.

Belongs to the MurB family. FAD is required as a cofactor.

Its subcellular location is the cytoplasm. The catalysed reaction is UDP-N-acetyl-alpha-D-muramate + NADP(+) = UDP-N-acetyl-3-O-(1-carboxyvinyl)-alpha-D-glucosamine + NADPH + H(+). The protein operates within cell wall biogenesis; peptidoglycan biosynthesis. In terms of biological role, cell wall formation. The chain is UDP-N-acetylenolpyruvoylglucosamine reductase from Alkalilimnicola ehrlichii (strain ATCC BAA-1101 / DSM 17681 / MLHE-1).